We begin with the raw amino-acid sequence, 337 residues long: ELAV-like protein 1-A (337 aa).

RRM domains follow at residues 20 to 109 (TNLI…FARP), 117 to 197 (ANLY…FAAN), and 255 to 333 (WCIF…FKTS).

It belongs to the RRM elav family. As to quaternary structure, interacts (via RRM3) with cirbp. Unable to form oligomers. Part of a ribonucleoprotein (RNP) complex, at least composed of elavl1/elrA and/or elavl2/elrB, igf2bp3/vg1RBP, ddx6/Xp54, ybx2/frgy2, lsm14b/rap55b and, in a subset of RNP complexes, stau1/staufen. As to expression, ubiquitously expressed in adults.

It localises to the cytoplasm. It is found in the cell cortex. Functionally, RNA-binding protein that binds to the 3'-UTR region of mRNAs and increases their stability. Involved in embryonic stem cells (ESCs) differentiation: preferentially binds mRNAs that are not methylated by N6-methyladenosine (m6A), stabilizing them, promoting ESCs differentiation. Binds to poly-U elements and AU-rich elements (AREs) in the 3'-UTR of target mRNAs. May be involved in cytoplasmic mRNA polyadenylation. Acts cooperatively with cribp to stabilize AU-rich sequence (ARE)-containing mRNAs. May play a role during gastrulation. Required for the vegetal localization of vg1 mRNA. The polypeptide is ELAV-like protein 1-A (elavl1-a) (Xenopus laevis (African clawed frog)).